The chain runs to 671 residues: Probable serine/threonine-protein kinase DDB_G0286627 (671 aa).

One can recognise a Protein kinase domain in the interval 31 to 283 (WVIERQLSKG…SHQLIKHPFF (253 aa)). ATP-binding positions include 37–45 (LSKGSFGQV) and Lys61. The Proton acceptor role is filled by Asp148. A helical membrane pass occupies residues 369–389 (FKIIYLFLILLFLMTILVNLN). Residues 410–523 (PESNPIKKPS…PPVTETPKPT (114 aa)) are disordered. Over residues 427–490 (NQYSEGSQSS…PTDSSTTDPP (64 aa)) the composition is skewed to low complexity. The segment covering 491–513 (VTDPPITDPPITDPPVTDPPITE) has biased composition (pro residues).

The protein belongs to the protein kinase superfamily. STE Ser/Thr protein kinase family. Mg(2+) is required as a cofactor.

Its subcellular location is the membrane. The enzyme catalyses L-seryl-[protein] + ATP = O-phospho-L-seryl-[protein] + ADP + H(+). The catalysed reaction is L-threonyl-[protein] + ATP = O-phospho-L-threonyl-[protein] + ADP + H(+). The polypeptide is Probable serine/threonine-protein kinase DDB_G0286627 (Dictyostelium discoideum (Social amoeba)).